A 325-amino-acid polypeptide reads, in one-letter code: Elongation factor P--(R)-beta-lysine ligase (325 aa).

76–78 serves as a coordination point for substrate; the sequence is SPE. ATP-binding positions include 100–102 and N109; that span reads RNE. Residue Y118 participates in substrate binding. Residue 244–245 participates in ATP binding; it reads EL. E251 provides a ligand contact to substrate. G300 is an ATP binding site.

This sequence belongs to the class-II aminoacyl-tRNA synthetase family. EpmA subfamily. Homodimer.

It carries out the reaction D-beta-lysine + L-lysyl-[protein] + ATP = N(6)-((3R)-3,6-diaminohexanoyl)-L-lysyl-[protein] + AMP + diphosphate + H(+). Its function is as follows. With EpmB is involved in the beta-lysylation step of the post-translational modification of translation elongation factor P (EF-P). Catalyzes the ATP-dependent activation of (R)-beta-lysine produced by EpmB, forming a lysyl-adenylate, from which the beta-lysyl moiety is then transferred to the epsilon-amino group of a conserved specific lysine residue in EF-P. The polypeptide is Elongation factor P--(R)-beta-lysine ligase (Pectobacterium carotovorum subsp. carotovorum (strain PC1)).